A 237-amino-acid chain; its full sequence is Maternal B9.10 protein (237 aa).

The protein belongs to the BTG family.

The polypeptide is Maternal B9.10 protein (Xenopus laevis (African clawed frog)).